The sequence spans 759 residues: TIR domain-containing adapter molecule 1 (759 aa).

Residues 1–153 (MACTGPSLSG…CGWDVLGDLG (153 aa)) are TRIF-NTD. The TRAF6-binding signature appears at 84–91 (ETPEEPPD). The pLxIS motif signature appears at 207–210 (LEIS). Residue serine 210 is modified to Phosphoserine. Lysine 229 is covalently cross-linked (Glycyl lysine isopeptide (Lys-Gly) (interchain with G-Cter in ubiquitin)). A disordered region spans residues 241–296 (EPAPMGCQEPEEMSWPPSVEAADSPVRPSSPGPGLPEVTTDACPASPHDPPEVPEI). 2 consecutive short sequence motifs (TRAF6-binding) follow at residues 248-255 (QEPEEMSW) and 299-309 (HYPVECTDVPA). The disordered stretch occupies residues 340 to 426 (LSAQPRPPTP…PEPPPPELES (87 aa)). The span at 351–365 (VPQTSPSFPSASTSP) shows a compositional bias: low complexity. A compositionally biased stretch (pro residues) spans 366 to 376 (FPSPSTPPEAH). The region spanning 430–590 (KFYNFVVLHA…QDARALREQS (161 aa)) is the TIR domain. The interval 549–759 (LLDEHSKIFA…APEDNTRETE (211 aa)) is sufficient to induce apoptosis. Positions 642–723 (GQGSLGTPPS…PPARPQSPGL (82 aa)) are disordered. The span at 659-705 (HQPPPLPPWLGGTPPPIFPQPPQTFPQPPPTFPQPPPTFQQPPPACP) shows a compositional bias: pro residues.

In terms of assembly, homodimer. Found in a multi-helicase-TICAM1 complex at least composed of DHX36, DDX1, DDX21 and TICAM1; this complex exists in resting cells with or without poly(I:C) RNA ligand stimulation. Interacts (via TIR domain) with DDX21 (via C-terminus). Interacts (via TIR domain) with DHX36 (via C-terminus). Interacts with AZI2 and IRF7. Interacts with TICAM2 in TLR4 recruitment. Interaction with PIAS4 inhibits the TICAM1-induced NF-kappa-B, IRF and IFNB1 activation. Interacts with IKBKB and IKBKE. Interaction with SARM1 blocks TICAM1-dependent transcription factor activation. Interacts with TRAF3. Interacts (when phosphorylated) with IRF3; following activation and phosphorylation on the pLxIS motif by TBK1, recruits IRF3. Interacts with TBK1, TRAF6 and RIPK1 and these interactions are enhanced in the presence of WDFY1. Interacts with TRAFD1. Interacts with UBQLN1 (via UBA domain). Interacts with TLR4 in response to LPS in a WDFY1-dependent manner. Interacts with WDFY1 in response to poly(I:C). Interacts (via the TIR domain) with TLR3 in response to poly(I:C) and this interaction is enhanced in the presence of WDFY1. Interacts with TRIM56. Component of a multi-helicase-TICAM1 complex that acts as a cytoplasmic sensor of viral double-stranded RNA (dsRNA) and plays a role in the activation of a cascade of antiviral responses including the induction of pro-inflammatory cytokines. Interacts (via the TIR domain) with TLR5. Interacts with TRIM8. Interacts with TAX1BP1 and TRIM32; these interactions target TICAM1 to TAX1BP1-mediated selective autophagic degradation. Interacts with DDX50. Post-translationally, phosphorylated by TBK1. Following activation, phosphorylated by TBK1 at Ser-210 in the pLxIS motif. The phosphorylated pLxIS motif constitutes an IRF3-binding motif, leading to recruitment of the transcription factor IRF3 to induce type-I interferons and other cytokines. In terms of processing, polyubiquitinated at Lys-229 by TRIM38 with 'Lys-48'-linked chains, leading to proteasomal degradation. Polyubiquitinated with 'Lys-6' and 'Lys-33'-linked chains in a TRIM8-dependent manner.

The protein resides in the cytoplasmic vesicle. It is found in the autophagosome. The protein localises to the cytoplasm. Its subcellular location is the cytosol. It localises to the mitochondrion. Its function is as follows. Involved in innate immunity against invading pathogens. Adapter used by TLR3, TLR4 (through TICAM2) and TLR5 to mediate NF-kappa-B and interferon-regulatory factor (IRF) activation, and to induce apoptosis. Ligand binding to these receptors results in TRIF recruitment through its TIR domain. Distinct protein-interaction motifs allow recruitment of the effector proteins TBK1, TRAF6 and RIPK1, which in turn, lead to the activation of transcription factors IRF3 and IRF7, NF-kappa-B and FADD respectively. Phosphorylation by TBK1 on the pLxIS motif leads to recruitment and subsequent activation of the transcription factor IRF3 to induce expression of type I interferon and exert a potent immunity against invading pathogens. Component of a multi-helicase-TICAM1 complex that acts as a cytoplasmic sensor of viral double-stranded RNA (dsRNA) and plays a role in the activation of a cascade of antiviral responses including the induction of pro-inflammatory cytokines. This Bos taurus (Bovine) protein is TIR domain-containing adapter molecule 1 (TICAM1).